An 865-amino-acid polypeptide reads, in one-letter code: MYMSTDEVRNAFLKFFESKGHQIVESSSLVPHNDPTLLFTNAGMNQFKDCFLGLEKRAYTRATTAQRCVRAGGKHNDLENVGFTARHHTFFEMLGNFSFGDYFKEDAIAFAWEFLTETLKLPADRLLVTVYETDDEAFDIWNKKVGVPADRIIRIGDKKGGKPFESDNFWQMGDTGPCGPCTEIFYDHGEHIWGGRPGTPEEDGDRFIEIWNNVFMQFNRQADGTMEPLPKPSVDTGMGIERISAIMQGVHSNYEIDVFQALIKAAAEVIGYEDLSNQSLRVIADHIRSCSFLIVDGVMPSNEGRGYVLRRIIRRAVRHGNKLGAQGAFFHKLVGVLAEIMGTAGEELKRQQAVVEKVLRIEEENFGRTLERGMAILNEALDNISSQGTDGKVLDGETVFKLYDTYGFPADLTNDVAREREFAIDEEGFEKAMEEQRQRAREAGNFGTDYNAAIKVDTQTEFCGYTGTKGSSSVAAMFVEGNEVESLSAGDKAIIVLGETPFYAESGGQCGDAGEIRTESGVFRVEDTQKLGNAIAHHGVMAEGVLAKGDEVATIVDAERRAAISLNHSATHLLHAALRQLLGEHVTQKGSLVKADGLRFDFSHLEAVTAAELKEVERLVNAQIRRNHVIETNVMDIESAKKKGAMALFGEKYDDEVRVLSMGDFSTELCGGIHASSTGDIGLFKITSEGGIAAGIRRIEAVTGEGALDAIEAQAAKYEEKLAESAQKAKSLEKEIQKLKDKMAAAESANIMGKVQDINGTKVLIAALEGADNKNLRTMVDDIKNQVGSGVILLANVNDDKIGLIAGVTKDLIGKVKAGDLVKMVAEQVGGKGGGRPDMAQAGGTDVAALPAAIQTVQPWLEERL.

4 residues coordinate Zn(2+): His-568, His-572, Cys-670, and His-674.

It belongs to the class-II aminoacyl-tRNA synthetase family. The cofactor is Zn(2+).

The protein localises to the cytoplasm. The enzyme catalyses tRNA(Ala) + L-alanine + ATP = L-alanyl-tRNA(Ala) + AMP + diphosphate. In terms of biological role, catalyzes the attachment of alanine to tRNA(Ala) in a two-step reaction: alanine is first activated by ATP to form Ala-AMP and then transferred to the acceptor end of tRNA(Ala). Also edits incorrectly charged Ser-tRNA(Ala) and Gly-tRNA(Ala) via its editing domain. The protein is Alanine--tRNA ligase of Vibrio campbellii (strain ATCC BAA-1116).